Reading from the N-terminus, the 341-residue chain is Mitochondrial ubiquitin ligase activator of nfkb 1-A (341 aa).

Over 1–5 the chain is Cytoplasmic; that stretch reads MEDFP. The helical transmembrane segment at 6–26 threads the bilayer; it reads VLEMVCLGSSVALSGLFYYIY. Over 27 to 233 the chain is Mitochondrial intermembrane; it reads RKKRKTVDKL…LLMEQEGQAE (207 aa). The chain crosses the membrane as a helical span at residues 234-254; the sequence is VWRVFACICALAGVAVLIWTG. At 255-341 the chain is on the cytoplasmic side; it reads RRYYRQLKLR…IKRVVPLYQA (87 aa). An RING-type zinc finger spans residues 292–329; the sequence is CVICLSNPRGCVLLDCGHVCCCFRCYQALPQPFCPICR.

In terms of assembly, homooligomer.

The protein localises to the mitochondrion outer membrane. It carries out the reaction S-ubiquitinyl-[E2 ubiquitin-conjugating enzyme]-L-cysteine + [acceptor protein]-L-lysine = [E2 ubiquitin-conjugating enzyme]-L-cysteine + N(6)-ubiquitinyl-[acceptor protein]-L-lysine.. It functions in the pathway protein modification; protein ubiquitination. E3 ubiquitin-protein ligase that plays a role in the control of mitochondrial morphology. Promotes mitochondrial fragmentation and influences mitochondrial localization. Inhibits cell growth. E3 ubiquitin ligases accept ubiquitin from an E2 ubiquitin-conjugating enzyme in the form of a thioester and then directly transfer the ubiquitin to targeted substrates. The sequence is that of Mitochondrial ubiquitin ligase activator of nfkb 1-A (mul1a) from Danio rerio (Zebrafish).